The primary structure comprises 333 residues: Tetraacyldisaccharide 4'-kinase (333 aa).

60-67 (TVGGTGKT) contributes to the ATP binding site.

This sequence belongs to the LpxK family.

The enzyme catalyses a lipid A disaccharide + ATP = a lipid IVA + ADP + H(+). It functions in the pathway glycolipid biosynthesis; lipid IV(A) biosynthesis; lipid IV(A) from (3R)-3-hydroxytetradecanoyl-[acyl-carrier-protein] and UDP-N-acetyl-alpha-D-glucosamine: step 6/6. Its function is as follows. Transfers the gamma-phosphate of ATP to the 4'-position of a tetraacyldisaccharide 1-phosphate intermediate (termed DS-1-P) to form tetraacyldisaccharide 1,4'-bis-phosphate (lipid IVA). This Pseudomonas putida (strain ATCC 700007 / DSM 6899 / JCM 31910 / BCRC 17059 / LMG 24140 / F1) protein is Tetraacyldisaccharide 4'-kinase.